A 60-amino-acid chain; its full sequence is Mastoparan-VT5 (60 aa).

Positions 1–27 (MKNTILILFTAFIALLGFFGMIAEPLA) are cleaved as a signal peptide. 4 AXPX repeats span residues 27–30 (ADPL), 31–34 (ADPL), 37–40 (ADPD), and 41–44 (ADPE). A propeptide spanning residues 28-45 (DPLADPLPDADPDADPET) is cleaved from the precursor.

Belongs to the MCD family. Mastoparan subfamily. As to expression, expressed by the venom gland.

It localises to the secreted. Functionally, the synthetic peptide shows weak antimicrobial activities against a few Gram-positive bacteria (only 2 on the 11 strains tested) and the fungus C.albicans. Does not show activity against all the Gram-negative bacteria tested. Exhibits little hemolytic activity against washed human erythrocytes. The sequence is that of Mastoparan-VT5 from Vespa tropica (Greater banded hornet).